Consider the following 427-residue polypeptide: Enolase (427 aa).

Residue Q163 participates in (2R)-2-phosphoglycerate binding. The Proton donor role is filled by E205. Mg(2+)-binding residues include D242, E288, and D315. K340, R369, S370, and K391 together coordinate (2R)-2-phosphoglycerate. The active-site Proton acceptor is the K340.

The protein belongs to the enolase family. Mg(2+) is required as a cofactor.

Its subcellular location is the cytoplasm. It is found in the secreted. The protein resides in the cell surface. It carries out the reaction (2R)-2-phosphoglycerate = phosphoenolpyruvate + H2O. Its pathway is carbohydrate degradation; glycolysis; pyruvate from D-glyceraldehyde 3-phosphate: step 4/5. In terms of biological role, catalyzes the reversible conversion of 2-phosphoglycerate (2-PG) into phosphoenolpyruvate (PEP). It is essential for the degradation of carbohydrates via glycolysis. The protein is Enolase of Amoebophilus asiaticus (strain 5a2).